A 134-amino-acid chain; its full sequence is D-ribose pyranase (134 aa).

Histidine 20 (proton donor) is an active-site residue. Substrate-binding positions include aspartate 28, histidine 99, and 123 to 125 (YSN).

This sequence belongs to the RbsD / FucU family. RbsD subfamily. Homodecamer.

Its subcellular location is the cytoplasm. It catalyses the reaction beta-D-ribopyranose = beta-D-ribofuranose. Its pathway is carbohydrate metabolism; D-ribose degradation; D-ribose 5-phosphate from beta-D-ribopyranose: step 1/2. In terms of biological role, catalyzes the interconversion of beta-pyran and beta-furan forms of D-ribose. This is D-ribose pyranase from Staphylococcus aureus (strain USA300).